The chain runs to 241 residues: Endothelial protein C receptor (241 aa).

The N-terminal stretch at 1-17 (MLTTLLPLLPLLLPGWA) is a signal peptide. At 18–212 (LCSQEASDGP…GSQTGRSYTS (195 aa)) the chain is on the extracellular side. Asn-49, Asn-66, Asn-138, and Asn-174 each carry an N-linked (GlcNAc...) asparagine glycan. 2 disulfides stabilise this stretch: Cys-120–Cys-188 and Cys-221–Cys-234. The chain crosses the membrane as a helical span at residues 213–233 (LVLGVLVGCFIVTGVAVGIFL). The Cytoplasmic portion of the chain corresponds to 234–241 (CTGGRRRC).

In terms of tissue distribution, expressed in endothelial cells.

The protein localises to the membrane. Functionally, binds activated protein C. Enhances protein C activation by the thrombin-thrombomodulin complex; plays a role in the protein C pathway controlling blood coagulation. The polypeptide is Endothelial protein C receptor (PROCR) (Bos taurus (Bovine)).